We begin with the raw amino-acid sequence, 106 residues long: 1-deoxy-D-xylulose 5-phosphate reductoisomerase (106 aa).

D3 provides a ligand contact to Mn(2+). Residues S4, E5, S29, H52, S65, N70, K71, and E74 each coordinate 1-deoxy-D-xylulose 5-phosphate. E5 serves as a coordination point for Mn(2+). E74 lines the Mn(2+) pocket.

It belongs to the DXR family. Mn(2+) is required as a cofactor. Requires Mg(2+) as cofactor.

Its subcellular location is the plastid. The protein resides in the chloroplast stroma. The enzyme catalyses 2-C-methyl-D-erythritol 4-phosphate + NADP(+) = 1-deoxy-D-xylulose 5-phosphate + NADPH + H(+). It functions in the pathway isoprenoid biosynthesis; isopentenyl diphosphate biosynthesis via DXP pathway; isopentenyl diphosphate from 1-deoxy-D-xylulose 5-phosphate: step 1/6. Its function is as follows. Enzyme of the plastid non-mevalonate pathway for isoprenoid biosynthesis that catalyzes the NADPH-dependent rearrangement and reduction of 1-deoxy-D-xylulose-5-phosphate (DXP) to 2-C-methyl-D-erythritol 4-phosphate (MEP). Required for chloroplast development. The protein is 1-deoxy-D-xylulose 5-phosphate reductoisomerase of Origanum vulgare (Wild marjoram).